The chain runs to 364 residues: DNA polymerase IV (364 aa).

A UmuC domain is found at 14 to 198 (IIHIDMDAFF…LPVEKFHGVG (185 aa)). Residues D18 and D116 each contribute to the Mg(2+) site. Residue E117 is part of the active site.

Belongs to the DNA polymerase type-Y family. In terms of assembly, monomer. Mg(2+) is required as a cofactor.

The protein localises to the cytoplasm. It carries out the reaction DNA(n) + a 2'-deoxyribonucleoside 5'-triphosphate = DNA(n+1) + diphosphate. In terms of biological role, poorly processive, error-prone DNA polymerase involved in untargeted mutagenesis. Copies undamaged DNA at stalled replication forks, which arise in vivo from mismatched or misaligned primer ends. These misaligned primers can be extended by PolIV. Exhibits no 3'-5' exonuclease (proofreading) activity. May be involved in translesional synthesis, in conjunction with the beta clamp from PolIII. The polypeptide is DNA polymerase IV (Lactococcus lactis subsp. cremoris (strain SK11)).